Here is a 30-residue protein sequence, read N- to C-terminus: Fibrinogen (30 aa).

Homodimer. Secreted into the hemolymph.

The protein localises to the secreted. It is found in the extracellular space. Its function is as follows. Clotting protein. This Panulirus interruptus (California spiny lobster) protein is Fibrinogen.